The sequence spans 499 residues: Glutamate--tRNA ligase (499 aa).

The 'HIGH' region motif lies at Pro-12–Asn-22. The short motif at Lys-259 to Arg-263 is the 'KMSKS' region element. Lys-262 is a binding site for ATP.

This sequence belongs to the class-I aminoacyl-tRNA synthetase family. Glutamate--tRNA ligase type 1 subfamily. In terms of assembly, monomer.

Its subcellular location is the cytoplasm. The enzyme catalyses tRNA(Glu) + L-glutamate + ATP = L-glutamyl-tRNA(Glu) + AMP + diphosphate. Functionally, catalyzes the attachment of glutamate to tRNA(Glu) in a two-step reaction: glutamate is first activated by ATP to form Glu-AMP and then transferred to the acceptor end of tRNA(Glu). The polypeptide is Glutamate--tRNA ligase (Lactobacillus acidophilus (strain ATCC 700396 / NCK56 / N2 / NCFM)).